The primary structure comprises 250 residues: UPF0736 protein BLi01230/BL03322 (250 aa).

The protein belongs to the UPF0736 family.

This is UPF0736 protein BLi01230/BL03322 from Bacillus licheniformis (strain ATCC 14580 / DSM 13 / JCM 2505 / CCUG 7422 / NBRC 12200 / NCIMB 9375 / NCTC 10341 / NRRL NRS-1264 / Gibson 46).